We begin with the raw amino-acid sequence, 141 residues long: Large ribosomal subunit protein bL17 (141 aa).

The protein belongs to the bacterial ribosomal protein bL17 family. Part of the 50S ribosomal subunit. Contacts protein L32.

This Allorhizobium ampelinum (strain ATCC BAA-846 / DSM 112012 / S4) (Agrobacterium vitis (strain S4)) protein is Large ribosomal subunit protein bL17.